A 346-amino-acid chain; its full sequence is MQYHRIPHSSLEVSTLGLGTMTFGEQNSEADAHAQLDYAVAQGINLIDVAEMYPVPPRPETQGLTETYVGNWLAKHGSREKLIIASKVSGPSRNNDKGIRPDQALDRKNIREALHDSLKRLQTDYLDLYQVHWPQRPTNCFGKLGYSWTDSAPAVSLLDTLDALAEYQRAGKIRYIGVSNETAFGVMRYLHLADKHDLPRIVTIQNPYSLLNRSFEVGLAEVSQYEGVELLAYSCLGFGTLTGKYLNGAKPAGARNTLFSRFTRYSGEQTQKAVAAYVDIARRHGLDPAQMALAFVRRQPFVASTLLGATTMDQLKTNIESLHLELSEDVLAEIEAVHQVYTYPAP.

The active-site Proton donor is the Tyr53. NADP(+) is bound at residue 234–244 (SCLGFGTLTGK).

It belongs to the aldo/keto reductase family. Aldo/keto reductase 2 subfamily.

The chain is Protein tas (tas) from Escherichia coli (strain K12).